Reading from the N-terminus, the 54-residue chain is Insulin (54 aa).

Cystine bridges form between Cys-7–Cys-39, Cys-19–Cys-52, and Cys-38–Cys-43.

The protein belongs to the insulin family. As to quaternary structure, heterodimer of a B chain and an A chain linked by two disulfide bonds.

It localises to the secreted. Functionally, insulin decreases blood glucose concentration. It increases cell permeability to monosaccharides, amino acids and fatty acids. It accelerates glycolysis, the pentose phosphate cycle, and glycogen synthesis in liver. The polypeptide is Insulin (ins) (Squalus acanthias (Spiny dogfish)).